The following is a 192-amino-acid chain: Ion-translocating oxidoreductase complex subunit A (192 aa).

Transmembrane regions (helical) follow at residues 5-25, 39-59, 63-83, 102-122, 134-154, and 171-191; these read LLLLVGTVLVNNFVLVKFLGL, IGMGLATTFVLTLASVSAYLV, ILTPLGIEYLRTMSFILVIAV, LLGIFLPLITTNCAVLGVALL, IIYGFGAAVGFSLVLILFAAM, and SIAMITAGLMSLAFMGFTGLV.

Belongs to the NqrDE/RnfAE family. In terms of assembly, the complex is composed of six subunits: RnfA, RnfB, RnfC, RnfD, RnfE and RnfG.

It is found in the cell inner membrane. Functionally, part of a membrane-bound complex that couples electron transfer with translocation of ions across the membrane. The chain is Ion-translocating oxidoreductase complex subunit A from Vibrio atlanticus (strain LGP32) (Vibrio splendidus (strain Mel32)).